A 350-amino-acid polypeptide reads, in one-letter code: Serine-threonine kinase receptor-associated protein (350 aa).

WD repeat units follow at residues 12–56, 57–96, 98–137, 141–179, 180–212, 221–262, and 263–302; these read GHTR…GTFL, GHKG…ELMT, AHKH…AEPK, GHTS…EVKS, LNFN…HSAV, EAPA…ESYK, and GHFG…TYGL. S312, S335, and S338 each carry phosphoserine. The segment at 326 to 350 is disordered; that stretch reads AEEELEEIASENSDSIYSSTPEVKA. Residues 337-350 show a composition bias toward polar residues; it reads NSDSIYSSTPEVKA. A Phosphotyrosine modification is found at Y342.

This sequence belongs to the WD repeat STRAP family. In terms of assembly, part of the core SMN complex that contains SMN1, GEMIN2/SIP1, DDX20/GEMIN3, GEMIN4, GEMIN5, GEMIN6, GEMIN7, GEMIN8 and STRAP/UNRIP. Part of the SMN-Sm complex that contains SMN1, GEMIN2/SIP1, DDX20/GEMIN3, GEMIN4, GEMIN5, GEMIN6, GEMIN7, GEMIN8, STRAP/UNRIP and the Sm proteins SNRPB, SNRPD1, SNRPD2, SNRPD3, SNRPE, SNRPF and SNRPG. Interacts directly with GEMIN6 and GEMIN7. Associates with the SMN complex in the cytoplasm but not in the nucleus. Also interacts with CSDE1/UNR and MAWBP. Interacts with PDPK1. Interacts with TRIM48.

Its subcellular location is the cytoplasm. The protein localises to the nucleus. In terms of biological role, the SMN complex catalyzes the assembly of small nuclear ribonucleoproteins (snRNPs), the building blocks of the spliceosome, and thereby plays an important role in the splicing of cellular pre-mRNAs. Most spliceosomal snRNPs contain a common set of Sm proteins SNRPB, SNRPD1, SNRPD2, SNRPD3, SNRPE, SNRPF and SNRPG that assemble in a heptameric protein ring on the Sm site of the small nuclear RNA to form the core snRNP (Sm core). In the cytosol, the Sm proteins SNRPD1, SNRPD2, SNRPE, SNRPF and SNRPG are trapped in an inactive 6S pICln-Sm complex by the chaperone CLNS1A that controls the assembly of the core snRNP. To assemble core snRNPs, the SMN complex accepts the trapped 5Sm proteins from CLNS1A forming an intermediate. Binding of snRNA inside 5Sm triggers eviction of the SMN complex, thereby allowing binding of SNRPD3 and SNRPB to complete assembly of the core snRNP. STRAP plays a role in the cellular distribution of the SMN complex. Negatively regulates TGF-beta signaling but positively regulates the PDPK1 kinase activity by enhancing its autophosphorylation and by significantly reducing the association of PDPK1 with 14-3-3 protein. This Mus musculus (Mouse) protein is Serine-threonine kinase receptor-associated protein (Strap).